Consider the following 115-residue polypeptide: MDARQAAALLLVLLLVTDWSHAEGPGGRDGGDQIFMEEDSGAHPAQDAQTPRSLLRSLLQAMQRPGRSPAFLFQPQRFGRNTRGSWSNKRLSPRAGEGLSSPFWSLAAPQRFGKK.

Positions 1-22 are cleaved as a signal peptide; it reads MDARQAAALLLVLLLVTDWSHA. 2 disordered regions span residues 20–51 and 78–102; these read SHAEGPGGRDGGDQIFMEEDSGAHPAQDAQTP and FGRNTRGSWSNKRLSPRAGEGLSSP. The propeptide occupies 23-66; that stretch reads EGPGGRDGGDQIFMEEDSGAHPAQDAQTPRSLLRSLLQAMQRPG. The residue at position 78 (phenylalanine 78) is a Phenylalanine amide. A propeptide spanning residues 81 to 94 is cleaved from the precursor; sequence NTRGSWSNKRLSPR. Phenylalanine 112 carries the phenylalanine amide modification.

Belongs to the FARP (FMRFamide related peptide) family.

The protein resides in the secreted. Morphine modulating peptides. Have wide-ranging physiologic effects, including the modulation of morphine-induced analgesia, elevation of arterial blood pressure, and increased somatostatin secretion from the pancreas. The neuropeptide FF potentiates and sensitizes ASIC3 cation channel. In Bos taurus (Bovine), this protein is Pro-FMRFamide-related neuropeptide FF (NPFF).